The chain runs to 336 residues: Phospho-N-acetylmuramoyl-pentapeptide-transferase (336 aa).

The next 10 helical transmembrane spans lie at 1 to 21, 56 to 76, 78 to 98, 124 to 144, 148 to 168, 184 to 204, 210 to 230, 239 to 259, 264 to 284, and 314 to 334; these read MLPL…SLFL, IPTA…LLLF, IQLW…ALGW, CLAA…FLSF, FLGI…FAIA, GLDG…LVVA, PWAF…LGFL, VFMG…CAVL, FLLL…IVQV, and VVRN…IAVF.

It belongs to the glycosyltransferase 4 family. MraY subfamily. It depends on Mg(2+) as a cofactor.

The protein resides in the cell inner membrane. The catalysed reaction is UDP-N-acetyl-alpha-D-muramoyl-L-alanyl-gamma-D-glutamyl-meso-2,6-diaminopimeloyl-D-alanyl-D-alanine + di-trans,octa-cis-undecaprenyl phosphate = di-trans,octa-cis-undecaprenyl diphospho-N-acetyl-alpha-D-muramoyl-L-alanyl-D-glutamyl-meso-2,6-diaminopimeloyl-D-alanyl-D-alanine + UMP. It participates in cell wall biogenesis; peptidoglycan biosynthesis. Catalyzes the initial step of the lipid cycle reactions in the biosynthesis of the cell wall peptidoglycan: transfers peptidoglycan precursor phospho-MurNAc-pentapeptide from UDP-MurNAc-pentapeptide onto the lipid carrier undecaprenyl phosphate, yielding undecaprenyl-pyrophosphoryl-MurNAc-pentapeptide, known as lipid I. The protein is Phospho-N-acetylmuramoyl-pentapeptide-transferase of Chlamydia trachomatis serovar L2b (strain UCH-1/proctitis).